A 175-amino-acid polypeptide reads, in one-letter code: uncharacterized protein (175 aa).

In terms of domain architecture, HTH marR-type spans 10–157; that stretch reads LFELYAELIH…AERLFRDLVT (148 aa). The H-T-H motif DNA-binding region spans 68 to 91; it reads VTSIAEKMNTTKATVSRISTKLLG.

The protein resides in the cytoplasm. This is an uncharacterized protein from Bacillus subtilis (strain 168).